A 657-amino-acid polypeptide reads, in one-letter code: Probable potassium transport system protein Kup (657 aa).

The disordered stretch occupies residues 1-25 (MGSGPADEEHTVDTEPGVSPPRRTV). A run of 12 helical transmembrane segments spans residues 35–55 (VVVG…IYTI), 77–97 (VVSL…VLLV), 127–147 (TAVL…DSMI), 165–185 (PGLE…LFSV), 196–216 (LFGP…VSGI), 234–254 (FFFG…LAVT), 275–295 (WLVL…ALLL), 315–335 (WPMV…VITG), 365–385 (IYVP…VFAF), 394–414 (AFGM…FYIV), 422–442 (LWLV…FLAA), and 447–467 (LVHG…VMTT).

The protein belongs to the HAK/KUP transporter (TC 2.A.72) family.

It localises to the cell membrane. The enzyme catalyses K(+)(in) + H(+)(in) = K(+)(out) + H(+)(out). Transport of potassium into the cell. Likely operates as a K(+):H(+) symporter. The polypeptide is Probable potassium transport system protein Kup (Rhodococcus jostii (strain RHA1)).